The following is a 533-amino-acid chain: MSAPAAAPAKVLPSRSDFDEKEKEKDVRTSNIVAARAVADAIRTSLGPKGMDKMIISPNNEVLISNDGATILQNLELRHPAAKMLAELAKAQDIEAGDGTTSVCVIAGSLLGAVSQLMAKGIHPSIISEAFNLALNKSLEVLVSMSVPVSLTDRVSLVKSATTSLNSKVVSQYTNLASIAVDAVLSVINPATAVNVNLKDIKLIKKLGGTIEDTELVQGLVFDQTASHTAGGPTRIQNAKIGLIQFCLSAPKTYMDNNIVVSDYSKMDKVIKEEPKLILEMCRKIQKSGCNVLLVQKSILRDAVNDLSLHYLAKLKILVIKDIERDDIEFICNTIGCQPVANIDSFTADKLGKADLVEEVGTSDGKIVKVTGIPNPGKTVTVLCRGSNKLVLDEAERSLHDALCVIRSLVKKKFLIAGGGAPEIEVSQQVTAFSKTLTGITSYCVRAYAEALEIIPYTLAENAGLHPISIVTELRNKHAQGEINSGINVRKGAITNILQENVVQPLLVSTSALTLATETVVMLLKIDDIATAR.

The interval 1-26 is disordered; sequence MSAPAAAPAKVLPSRSDFDEKEKEKD. Residues 16 to 26 are compositionally biased toward basic and acidic residues; the sequence is SDFDEKEKEKD.

The protein belongs to the TCP-1 chaperonin family. Heterooligomeric complex of about 850 to 900 kDa that forms two stacked rings, 12 to 16 nm in diameter.

The protein localises to the cytoplasm. Its function is as follows. Molecular chaperone; assists the folding of proteins upon ATP hydrolysis. Known to play a role, in vitro, in the folding of actin and tubulin. The chain is T-complex protein 1 subunit delta (cct4) from Dictyostelium discoideum (Social amoeba).